The following is a 359-amino-acid chain: DNA replication and repair protein RecF (359 aa).

30–37 (GPNAKGKT) serves as a coordination point for ATP.

Belongs to the RecF family.

The protein resides in the cytoplasm. In terms of biological role, the RecF protein is involved in DNA metabolism; it is required for DNA replication and normal SOS inducibility. RecF binds preferentially to single-stranded, linear DNA. It also seems to bind ATP. The chain is DNA replication and repair protein RecF from Protochlamydia amoebophila (strain UWE25).